The chain runs to 278 residues: GTPase Era (278 aa).

Positions 7–168 (YCGYIAIVGK…ENLIYPYLPN (162 aa)) constitute an Era-type G domain. The tract at residues 15-22 (GKPNVGKS) is G1. 15–22 (GKPNVGKS) provides a ligand contact to GTP. The tract at residues 41-45 (NTTQK) is G2. The segment at 62-65 (DTPG) is G3. GTP-binding positions include 62 to 66 (DTPGI) and 117 to 120 (NKID). The segment at 117–120 (NKID) is G4. The interval 147–149 (ISA) is G5. In terms of domain architecture, KH type-2 spans 199-276 (LRDELPSIIT…YLIIWVKVKI (78 aa)).

The protein belongs to the TRAFAC class TrmE-Era-EngA-EngB-Septin-like GTPase superfamily. Era GTPase family. As to quaternary structure, monomer.

The protein resides in the cytoplasm. The protein localises to the cell membrane. In terms of biological role, an essential GTPase that binds both GDP and GTP, with rapid nucleotide exchange. Plays a role in 16S rRNA processing and 30S ribosomal subunit biogenesis and possibly also in cell cycle regulation and energy metabolism. The polypeptide is GTPase Era (Buchnera aphidicola subsp. Schizaphis graminum (strain Sg)).